Reading from the N-terminus, the 364-residue chain is Pre-small/secreted glycoprotein (364 aa).

Positions 1–32 (MGVTGILQLPRDRFKRTSFFLWVIILFQRTFS) are cleaved as a signal peptide. Asn40 carries N-linked (GlcNAc...) asparagine; by host glycosylation. 2 cysteine pairs are disulfide-bonded: Cys108/Cys135 and Cys121/Cys147. 5 N-linked (GlcNAc...) asparagine; by host glycosylation sites follow: Asn204, Asn228, Asn238, Asn257, and Asn268.

The protein belongs to the filoviruses glycoprotein family. Homodimer; disulfide-linked. The homodimers are linked by two disulfide bonds in a parallel orientation. As to quaternary structure, monomer. Post-translationally, this precursor is processed into mature sGP and delta-peptide by host furin or furin-like proteases. The cleavage site corresponds to the furin optimal cleavage sequence [KR]-X-[KR]-R. N-glycosylated. In terms of processing, O-glycosylated.

It is found in the secreted. In terms of biological role, seems to possess an anti-inflammatory activity as it can reverse the barrier-decreasing effects of TNF alpha. Might therefore contribute to the lack of inflammatory reaction seen during infection in spite the of extensive necrosis and massive virus production. Does not seem to be involved in activation of primary macrophages. Does not seem to interact specifically with neutrophils. Its function is as follows. Viroporin that permeabilizes mammalian cell plasma membranes. It acts by altering permeation of ionic compounds and small molecules. This activity may lead to viral enterotoxic activity. The polypeptide is Pre-small/secreted glycoprotein (GP) (Zaire ebolavirus (strain Gabon-94) (ZEBOV)).